Reading from the N-terminus, the 362-residue chain is Chalcone synthase A (362 aa).

The active site involves Cys-168.

It belongs to the thiolase-like superfamily. Chalcone/stilbene synthases family.

It catalyses the reaction (E)-4-coumaroyl-CoA + 3 malonyl-CoA + 3 H(+) = 2',4,4',6'-tetrahydroxychalcone + 3 CO2 + 4 CoA. It participates in secondary metabolite biosynthesis; flavonoid biosynthesis. Functionally, the primary product of this enzyme is 4,2',4',6'-tetrahydroxychalcone (also termed naringenin-chalcone or chalcone) which can under specific conditions spontaneously isomerize into naringenin. The polypeptide is Chalcone synthase A (CHSA) (Ipomoea trifida (Morning glory)).